We begin with the raw amino-acid sequence, 316 residues long: HPr kinase/phosphorylase (316 aa).

Residues histidine 146 and lysine 167 contribute to the active site. 161–168 (GESGLGKS) is a binding site for ATP. Residue serine 168 participates in Mg(2+) binding. The active-site Proton acceptor; for phosphorylation activity. Proton donor; for dephosphorylation activity is aspartate 185. The segment at 209–218 (LEVRGIGLLD) is important for the catalytic mechanism of both phosphorylation and dephosphorylation. A Mg(2+)-binding site is contributed by glutamate 210. The active site involves arginine 252. Residues 273–278 (QVEAGR) form an important for the catalytic mechanism of dephosphorylation region.

It belongs to the HPrK/P family. Homohexamer. Mg(2+) serves as cofactor.

It catalyses the reaction [HPr protein]-L-serine + ATP = [HPr protein]-O-phospho-L-serine + ADP + H(+). The catalysed reaction is [HPr protein]-O-phospho-L-serine + phosphate + H(+) = [HPr protein]-L-serine + diphosphate. Functionally, catalyzes the ATP- as well as the pyrophosphate-dependent phosphorylation of a specific serine residue in HPr, a phosphocarrier protein of the phosphoenolpyruvate-dependent sugar phosphotransferase system (PTS). HprK/P also catalyzes the pyrophosphate-producing, inorganic phosphate-dependent dephosphorylation (phosphorolysis) of seryl-phosphorylated HPr (P-Ser-HPr). In Polaromonas naphthalenivorans (strain CJ2), this protein is HPr kinase/phosphorylase.